The chain runs to 337 residues: Vacuolar protein sorting-associated protein 26B-A (337 aa).

The interval 313-337 is disordered; that stretch reads RFEGTSHPETRPQHSGAAAVEQEHE.

It belongs to the VPS26 family. In terms of assembly, component of the heterotrimeric retromer cargo-selective complex (CSC) which is believed to associate with variable sorting nexins to form functionally distinct retromer complex variants.

It is found in the cytoplasm. Its subcellular location is the endosome membrane. It localises to the early endosome. Functionally, acts as a component of the retromer cargo-selective complex (CSC). The CSC is believed to be the core functional component of retromer or respective retromer complex variants acting to prevent missorting of selected transmembrane cargo proteins into the lysosomal degradation pathway. Retromer mediates retrograde transport of cargo proteins from endosomes to the trans-Golgi network (TGN). This Xenopus laevis (African clawed frog) protein is Vacuolar protein sorting-associated protein 26B-A (vps26b-a).